The following is a 78-amino-acid chain: Omega-conotoxin PnVIA (78 aa).

The signal sequence occupies residues 1-22 (MKLTCMMIIAVLFLTAWTFVMA). Residues 23 to 45 (DDPRDEPEARDEMNPAASKLNER) constitute a propeptide that is removed on maturation. Disulfide bonds link Cys-47-Cys-65, Cys-54-Cys-69, and Cys-64-Cys-73. Gln-76 is subject to Glutamine amide.

As to expression, expressed by the venom duct.

The protein resides in the secreted. Functionally, omega-conotoxins act at presynaptic membranes, they bind and block voltage-gated calcium channels (Cav). Acts on high voltage-activated (HVA) calcium currents in molluscan neurons. This chain is Omega-conotoxin PnVIA, found in Conus pennaceus (Feathered cone).